Reading from the N-terminus, the 552-residue chain is Thermosome subunit beta (552 aa).

Residues 531–552 are disordered; sequence AGKKGGSEPGGKKEKEEKSSED. Residues 540–552 are compositionally biased toward basic and acidic residues; it reads GGKKEKEEKSSED.

The protein belongs to the TCP-1 chaperonin family. Forms a heterooligomeric complex of two stacked nine-membered rings; one of alpha and the other of beta subunits. Sometimes called a 'rosettasome'.

Its subcellular location is the cytoplasm. It carries out the reaction ATP + H2O = ADP + phosphate + H(+). Functionally, molecular chaperone; binds unfolded polypeptides in vitro, stimulates protein folding and has ATPase activity. One of the most abundant proteins in the cell at all temperatures. The chain is Thermosome subunit beta (thsB) from Saccharolobus shibatae (strain ATCC 51178 / DSM 5389 / JCM 8931 / NBRC 15437 / B12) (Sulfolobus shibatae).